Consider the following 291-residue polypeptide: NAD kinase (291 aa).

Asp73 acts as the Proton acceptor in catalysis. NAD(+)-binding positions include 73–74, 147–148, Arg175, Asp177, 188–193, Ala212, and Gln246; these read DG, ND, and TAYALS.

It belongs to the NAD kinase family. A divalent metal cation serves as cofactor.

It is found in the cytoplasm. The enzyme catalyses NAD(+) + ATP = ADP + NADP(+) + H(+). Involved in the regulation of the intracellular balance of NAD and NADP, and is a key enzyme in the biosynthesis of NADP. Catalyzes specifically the phosphorylation on 2'-hydroxyl of the adenosine moiety of NAD to yield NADP. The chain is NAD kinase from Polaromonas sp. (strain JS666 / ATCC BAA-500).